Here is a 1085-residue protein sequence, read N- to C-terminus: Error-prone DNA polymerase (1085 aa).

The protein belongs to the DNA polymerase type-C family. DnaE2 subfamily.

The protein resides in the cytoplasm. It carries out the reaction DNA(n) + a 2'-deoxyribonucleoside 5'-triphosphate = DNA(n+1) + diphosphate. DNA polymerase involved in damage-induced mutagenesis and translesion synthesis (TLS). It is not the major replicative DNA polymerase. In Symbiobacterium thermophilum (strain DSM 24528 / JCM 14929 / IAM 14863 / T), this protein is Error-prone DNA polymerase.